The chain runs to 602 residues: Aspartate--tRNA(Asp/Asn) ligase (602 aa).

Glutamate 176 is a binding site for L-aspartate. The tract at residues glutamine 200–lysine 203 is aspartate. L-aspartate-binding residues include arginine 222 and histidine 452. Arginine 222 to glutamate 224 provides a ligand contact to ATP. Glutamate 490 provides a ligand contact to ATP. Residue arginine 497 participates in L-aspartate binding. Glycine 542–arginine 545 contacts ATP.

Belongs to the class-II aminoacyl-tRNA synthetase family. Type 1 subfamily. As to quaternary structure, homodimer.

It localises to the cytoplasm. It catalyses the reaction tRNA(Asx) + L-aspartate + ATP = L-aspartyl-tRNA(Asx) + AMP + diphosphate. In terms of biological role, aspartyl-tRNA synthetase with relaxed tRNA specificity since it is able to aspartylate not only its cognate tRNA(Asp) but also tRNA(Asn). Reaction proceeds in two steps: L-aspartate is first activated by ATP to form Asp-AMP and then transferred to the acceptor end of tRNA(Asp/Asn). The sequence is that of Aspartate--tRNA(Asp/Asn) ligase from Rickettsia conorii (strain ATCC VR-613 / Malish 7).